We begin with the raw amino-acid sequence, 238 residues long: Lipid transferase CIDEC (238 aa).

Residues 1-35 form a required for liquid-liquid phase separation (LLPS) region; sequence MEYAMKSLSLLYPKSLSRHVSVRTSVVTQQLLSEP. The CIDE-N domain occupies 41–118; that stretch reads RARPCRVSTA…VLQKGQKWQP (78 aa).

It belongs to the CIDE family. Homodimer. Homooligomer; undergoes liquid-liquid phase separation (LLPS) via its N-terminus, facilitating lipid droplet fusion, occurs at the lipid droplet contact sites. Interacts with CIDEA. Interacts with PLIN1. Interacts with NFAT5; this interaction is direct and retains NFAT5 in the cytoplasm. Interacts with CEBPB. Interacts with isoform CLSTN3beta of CLSTN3; inhibiting the lipid transferase activity of CIDEC. Ubiquitinated and targeted to proteasomal degradation, resulting in a short half-life (about 15 minutes in 3T3-L1 cells). Protein stability depends on triaclyglycerol synthesis, fatty acid availability and lipid droplet formation. Expressed mainly in adipose tissue, small intestine, heart, colon and stomach and, at lower levels, in brain, kidney and liver.

Its subcellular location is the lipid droplet. It is found in the endoplasmic reticulum. The protein localises to the nucleus. The enzyme catalyses a triacyl-sn-glycerol(in) = a triacyl-sn-glycerol(out). Lipid transferase specifically expressed in white adipose tissue, which promotes unilocular lipid droplet formation by mediating lipid droplet fusion. Lipid droplet fusion promotes their enlargement, restricting lipolysis and favoring lipid storage. Localizes on the lipid droplet surface, at focal contact sites between lipid droplets, and mediates atypical lipid droplet fusion by undergoing liquid-liquid phase separation (LLPS) and promoting directional net neutral lipid transfer from the smaller to larger lipid droplets. The transfer direction may be driven by the internal pressure difference between the contacting lipid droplet pair. Its role in neutral lipid transfer and lipid droplet enlargement is activated by the interaction with PLIN1. May also act as a CEBPB coactivator in the white adipose tissue to control the expression of a subset of CEBPB downstream target genes, including SOCS1, SOCS3, TGFB1, TGFBR1, ID2 and XDH. When overexpressed in preadipocytes, induces apoptosis or increases cell susceptibility to apoptosis induced by serum deprivation or TGFB treatment. In Homo sapiens (Human), this protein is Lipid transferase CIDEC.